The following is a 92-amino-acid chain: Putative membrane protein insertion efficiency factor (92 aa).

It belongs to the UPF0161 family.

It localises to the cell inner membrane. Its function is as follows. Could be involved in insertion of integral membrane proteins into the membrane. This Synechococcus sp. (strain CC9902) protein is Putative membrane protein insertion efficiency factor.